A 131-amino-acid polypeptide reads, in one-letter code: DNA-directed RNA polymerase subunit omega (131 aa).

Residues Asp78 to Glu131 form a disordered region. Residues Gln104–Arg115 are compositionally biased toward basic and acidic residues.

The protein belongs to the RNA polymerase subunit omega family. The RNAP catalytic core consists of 2 alpha, 1 beta, 1 beta' and 1 omega subunit. When a sigma factor is associated with the core the holoenzyme is formed, which can initiate transcription.

The enzyme catalyses RNA(n) + a ribonucleoside 5'-triphosphate = RNA(n+1) + diphosphate. Functionally, promotes RNA polymerase assembly. Latches the N- and C-terminal regions of the beta' subunit thereby facilitating its interaction with the beta and alpha subunits. The chain is DNA-directed RNA polymerase subunit omega from Beijerinckia indica subsp. indica (strain ATCC 9039 / DSM 1715 / NCIMB 8712).